The chain runs to 682 residues: Glutamine--fructose-6-phosphate aminotransferase [isomerizing] 2 (682 aa).

Catalysis depends on C2, which acts as the For GATase activity. The region spanning 2–288 (CGIFAYMNYR…DDDIAAVADG (287 aa)) is the Glutamine amidotransferase type-2 domain. S244 carries the phosphoserine modification. SIS domains lie at 360–499 (HLKE…DRIS) and 531–672 (LALE…VDFP). Residues 377 to 378 (TS), 422 to 424 (SQS), T427, and H578 each bind substrate.

Highest levels of expression in heart, placenta, and spinal cord.

It carries out the reaction D-fructose 6-phosphate + L-glutamine = D-glucosamine 6-phosphate + L-glutamate. Its pathway is nucleotide-sugar biosynthesis; UDP-N-acetyl-alpha-D-glucosamine biosynthesis; alpha-D-glucosamine 6-phosphate from D-fructose 6-phosphate: step 1/1. In terms of biological role, controls the flux of glucose into the hexosamine pathway. Most likely involved in regulating the availability of precursors for N- and O-linked glycosylation of proteins. This is Glutamine--fructose-6-phosphate aminotransferase [isomerizing] 2 (GFPT2) from Homo sapiens (Human).